The following is a 111-amino-acid chain: Gastrula zinc finger protein XlCGF32.1 (111 aa).

4 C2H2-type zinc fingers span residues 6–28 (FDCTECGKSFKRKSKLKTHFLCH), 34–56 (FVCVHCGKGFRDNYKLSLHLRIH), 62–84 (SVCPDCGKSYTDKNKLIVHMRIH), and 89–111 (FMCSECGKGFSDFYNLKSHLQIH).

Belongs to the krueppel C2H2-type zinc-finger protein family.

It is found in the nucleus. May be involved in transcriptional regulation. This Xenopus laevis (African clawed frog) protein is Gastrula zinc finger protein XlCGF32.1.